A 412-amino-acid polypeptide reads, in one-letter code: CCA-adding enzyme (412 aa).

Residues Ser41 and Lys44 each coordinate ATP. The CTP site is built by Ser41 and Lys44. 3 residues coordinate Mg(2+): Asp53, Asp55, and Asp106. ATP-binding residues include His129, Lys149, and Tyr158. The CTP site is built by His129, Lys149, and Tyr158.

It belongs to the tRNA nucleotidyltransferase/poly(A) polymerase family. Archaeal CCA-adding enzyme subfamily. Homodimer. Requires Mg(2+) as cofactor.

The enzyme catalyses a tRNA precursor + 2 CTP + ATP = a tRNA with a 3' CCA end + 3 diphosphate. It catalyses the reaction a tRNA with a 3' CCA end + 2 CTP + ATP = a tRNA with a 3' CCACCA end + 3 diphosphate. Its function is as follows. Catalyzes the addition and repair of the essential 3'-terminal CCA sequence in tRNAs without using a nucleic acid template. Adds these three nucleotides in the order of C, C, and A to the tRNA nucleotide-73, using CTP and ATP as substrates and producing inorganic pyrophosphate. tRNA 3'-terminal CCA addition is required both for tRNA processing and repair. Also involved in tRNA surveillance by mediating tandem CCA addition to generate a CCACCA at the 3' terminus of unstable tRNAs. While stable tRNAs receive only 3'-terminal CCA, unstable tRNAs are marked with CCACCA and rapidly degraded. The polypeptide is CCA-adding enzyme (Saccharolobus islandicus (strain M.16.27) (Sulfolobus islandicus)).